The chain runs to 307 residues: Glutaminase (307 aa).

Residues serine 66, asparagine 116, glutamate 160, asparagine 167, tyrosine 191, tyrosine 243, and valine 261 each contribute to the substrate site.

The protein belongs to the glutaminase family. As to quaternary structure, homotetramer.

It carries out the reaction L-glutamine + H2O = L-glutamate + NH4(+). This Saccharophagus degradans (strain 2-40 / ATCC 43961 / DSM 17024) protein is Glutaminase.